The following is an 891-amino-acid chain: Alanine--tRNA ligase (891 aa).

The Zn(2+) site is built by H564, H568, C681, and H685.

It belongs to the class-II aminoacyl-tRNA synthetase family. It depends on Zn(2+) as a cofactor.

The protein localises to the cytoplasm. The enzyme catalyses tRNA(Ala) + L-alanine + ATP = L-alanyl-tRNA(Ala) + AMP + diphosphate. In terms of biological role, catalyzes the attachment of alanine to tRNA(Ala) in a two-step reaction: alanine is first activated by ATP to form Ala-AMP and then transferred to the acceptor end of tRNA(Ala). Also edits incorrectly charged Ser-tRNA(Ala) and Gly-tRNA(Ala) via its editing domain. The chain is Alanine--tRNA ligase from Methylorubrum populi (strain ATCC BAA-705 / NCIMB 13946 / BJ001) (Methylobacterium populi).